A 293-amino-acid chain; its full sequence is 1D-myo-inositol 2-acetamido-2-deoxy-alpha-D-glucopyranoside deacetylase 2 (293 aa).

3 residues coordinate Zn(2+): His-6, Asp-9, and His-142.

It belongs to the MshB deacetylase family. Zn(2+) is required as a cofactor.

The enzyme catalyses 1D-myo-inositol 2-acetamido-2-deoxy-alpha-D-glucopyranoside + H2O = 1D-myo-inositol 2-amino-2-deoxy-alpha-D-glucopyranoside + acetate. Catalyzes the deacetylation of 1D-myo-inositol 2-acetamido-2-deoxy-alpha-D-glucopyranoside (GlcNAc-Ins) in the mycothiol biosynthesis pathway. This is 1D-myo-inositol 2-acetamido-2-deoxy-alpha-D-glucopyranoside deacetylase 2 from Frankia alni (strain DSM 45986 / CECT 9034 / ACN14a).